The chain runs to 118 residues: Small ribosomal subunit protein uS13 (118 aa).

The segment at 94 to 118 (SLPLRGQRTKTNARTRKGPRKPIKK) is disordered.

The protein belongs to the universal ribosomal protein uS13 family. As to quaternary structure, part of the 30S ribosomal subunit. Forms a loose heterodimer with protein S19. Forms two bridges to the 50S subunit in the 70S ribosome.

Functionally, located at the top of the head of the 30S subunit, it contacts several helices of the 16S rRNA. In the 70S ribosome it contacts the 23S rRNA (bridge B1a) and protein L5 of the 50S subunit (bridge B1b), connecting the 2 subunits; these bridges are implicated in subunit movement. Contacts the tRNAs in the A and P-sites. This is Small ribosomal subunit protein uS13 from Vibrio parahaemolyticus serotype O3:K6 (strain RIMD 2210633).